The chain runs to 301 residues: Homoserine O-acetyltransferase (301 aa).

The active-site Acyl-thioester intermediate is Cys-142. 2 residues coordinate substrate: Lys-163 and Ser-192. His-235 functions as the Proton acceptor in the catalytic mechanism. Glu-237 is an active-site residue. Residue Arg-249 coordinates substrate.

Belongs to the MetA family.

The protein resides in the cytoplasm. It catalyses the reaction L-homoserine + acetyl-CoA = O-acetyl-L-homoserine + CoA. It functions in the pathway amino-acid biosynthesis; L-methionine biosynthesis via de novo pathway; O-acetyl-L-homoserine from L-homoserine: step 1/1. Its function is as follows. Transfers an acetyl group from acetyl-CoA to L-homoserine, forming acetyl-L-homoserine. The sequence is that of Homoserine O-acetyltransferase from Lachnoclostridium phytofermentans (strain ATCC 700394 / DSM 18823 / ISDg) (Clostridium phytofermentans).